Reading from the N-terminus, the 91-residue chain is Small ribosomal subunit protein bS16 (91 aa).

The protein belongs to the bacterial ribosomal protein bS16 family.

This is Small ribosomal subunit protein bS16 from Limosilactobacillus reuteri (strain DSM 20016) (Lactobacillus reuteri).